Here is an 83-residue protein sequence, read N- to C-terminus: UPF0512 protein W (83 aa).

Belongs to the UPF0512 family.

This is UPF0512 protein W from Dictyostelium discoideum (Social amoeba).